Consider the following 431-residue polypeptide: UDP-N-acetylglucosamine 1-carboxyvinyltransferase (431 aa).

22–23 (KN) provides a ligand contact to phosphoenolpyruvate. UDP-N-acetyl-alpha-D-glucosamine is bound at residue R102. The Proton donor role is filled by C126. A 2-(S-cysteinyl)pyruvic acid O-phosphothioketal modification is found at C126. UDP-N-acetyl-alpha-D-glucosamine is bound by residues D318 and I340.

Belongs to the EPSP synthase family. MurA subfamily.

It localises to the cytoplasm. The catalysed reaction is phosphoenolpyruvate + UDP-N-acetyl-alpha-D-glucosamine = UDP-N-acetyl-3-O-(1-carboxyvinyl)-alpha-D-glucosamine + phosphate. The protein operates within cell wall biogenesis; peptidoglycan biosynthesis. Cell wall formation. Adds enolpyruvyl to UDP-N-acetylglucosamine. The chain is UDP-N-acetylglucosamine 1-carboxyvinyltransferase from Bartonella henselae (strain ATCC 49882 / DSM 28221 / CCUG 30454 / Houston 1) (Rochalimaea henselae).